Reading from the N-terminus, the 357-residue chain is Trans-resveratrol di-O-methyltransferase (357 aa).

Residues Gly-200, Asp-223, Asp-243, Met-244, and Lys-257 each contribute to the S-adenosyl-L-methionine site. The active-site Proton acceptor is His-261.

It belongs to the class I-like SAM-binding methyltransferase superfamily. Cation-independent O-methyltransferase family. COMT subfamily.

The catalysed reaction is trans-resveratrol + 2 S-adenosyl-L-methionine = pterostilbene + 2 S-adenosyl-L-homocysteine + 2 H(+). In terms of biological role, catalyzes the biosynthesis of pterostilbene from resveratrol. Pterostilbene has both antifungal and pharmacological properties. Also has activity toward resveratrol monomethyl ether (RME). This chain is Trans-resveratrol di-O-methyltransferase (ROMT), found in Vitis vinifera (Grape).